A 176-amino-acid chain; its full sequence is RNA 2',3'-cyclic phosphodiesterase (176 aa).

Histidine 39 serves as the catalytic Proton donor. 2 consecutive short sequence motifs (HXTX) follow at residues 39–42 (HITL) and 122–125 (HLTV). Histidine 122 acts as the Proton acceptor in catalysis.

Belongs to the 2H phosphoesterase superfamily. ThpR family.

It carries out the reaction a 3'-end 2',3'-cyclophospho-ribonucleotide-RNA + H2O = a 3'-end 2'-phospho-ribonucleotide-RNA + H(+). Its function is as follows. Hydrolyzes RNA 2',3'-cyclic phosphodiester to an RNA 2'-phosphomonoester. In Archaeoglobus fulgidus (strain ATCC 49558 / DSM 4304 / JCM 9628 / NBRC 100126 / VC-16), this protein is RNA 2',3'-cyclic phosphodiesterase.